The following is a 445-amino-acid chain: UDP-N-acetylmuramoylalanine--D-glutamate ligase (445 aa).

111–117 contacts ATP; the sequence is GTNGKST.

This sequence belongs to the MurCDEF family.

It localises to the cytoplasm. It catalyses the reaction UDP-N-acetyl-alpha-D-muramoyl-L-alanine + D-glutamate + ATP = UDP-N-acetyl-alpha-D-muramoyl-L-alanyl-D-glutamate + ADP + phosphate + H(+). It functions in the pathway cell wall biogenesis; peptidoglycan biosynthesis. Cell wall formation. Catalyzes the addition of glutamate to the nucleotide precursor UDP-N-acetylmuramoyl-L-alanine (UMA). The polypeptide is UDP-N-acetylmuramoylalanine--D-glutamate ligase (murD) (Rickettsia prowazekii (strain Madrid E)).